A 258-amino-acid polypeptide reads, in one-letter code: MGVERIQAAFENGKKAFIPYVMGGDGGLEILKERIRFLDEAGASIVEIGIPFSDPVADGPTIQRAGKRALDSGVTVKGIFQALIEARKEVQIPFVLMTYLNPVLAFGKERFIENCMEAGVDGIIVPDLPYEEQDIIAPLLREANIALIPLVTVTSPIERIKKITSESEGFVYAVTVAGVTGVRQNFKDEIHSYLEKVKSHTHLPVVAGFGISTKEHVEEMVTICDGVVVGSKVIELLENEKREEICEFIQATKQKEEA.

Catalysis depends on proton acceptor residues Glu-47 and Asp-58.

This sequence belongs to the TrpA family. As to quaternary structure, tetramer of two alpha and two beta chains.

The catalysed reaction is (1S,2R)-1-C-(indol-3-yl)glycerol 3-phosphate + L-serine = D-glyceraldehyde 3-phosphate + L-tryptophan + H2O. Its pathway is amino-acid biosynthesis; L-tryptophan biosynthesis; L-tryptophan from chorismate: step 5/5. Its function is as follows. The alpha subunit is responsible for the aldol cleavage of indoleglycerol phosphate to indole and glyceraldehyde 3-phosphate. This is Tryptophan synthase alpha chain from Bacillus cereus (strain ZK / E33L).